The following is a 583-amino-acid chain: Sphingomyelin phosphodiesterase A (583 aa).

The first 21 residues, 1–21, serve as a signal peptide directing secretion; the sequence is MKSIPIILLVLIGLLLASVYS. The region spanning 51 to 133 is the Saposin B-type domain; it reads IQLSCDVCQI…GYFKICSATG (83 aa). 3 disulfides stabilise this stretch: Cys55/Cys129, Cys58/Cys123, and Cys86/Cys97. N-linked (GlcNAc...) asparagine glycosylation is present at Asn72. Residue Asn182 is glycosylated (N-linked (GlcNAc...) asparagine). Positions 193 and 195 each coordinate Zn(2+). Cys214 and Cys229 are disulfide-bonded. Zn(2+) is bound by residues Asp258 and Asn298. A glycan (N-linked (GlcNAc...) asparagine) is linked at Asn377. His401, His436, and His438 together coordinate Zn(2+). Residues Asn495, Asn500, Asn537, and Asn547 are each glycosylated (N-linked (GlcNAc...) asparagine). Cys567 and Cys580 are disulfide-bonded.

This sequence belongs to the acid sphingomyelinase family. Zn(2+) is required as a cofactor.

It is found in the secreted. In terms of biological role, converts sphingomyelin to ceramide. The polypeptide is Sphingomyelin phosphodiesterase A (sgmA) (Dictyostelium discoideum (Social amoeba)).